Consider the following 582-residue polypeptide: Aspartate--tRNA ligase (582 aa).

Residue E174 coordinates L-aspartate. Positions 198-201 (QITK) are aspartate. R220 is an L-aspartate binding site. Residues 220–222 (RDE) and Q229 each bind ATP. H443 provides a ligand contact to L-aspartate. An ATP-binding site is contributed by E477. R484 is an L-aspartate binding site. Residue 529–532 (GLDR) coordinates ATP.

It belongs to the class-II aminoacyl-tRNA synthetase family. Type 1 subfamily. In terms of assembly, homodimer.

It is found in the cytoplasm. The enzyme catalyses tRNA(Asp) + L-aspartate + ATP = L-aspartyl-tRNA(Asp) + AMP + diphosphate. Its function is as follows. Catalyzes the attachment of L-aspartate to tRNA(Asp) in a two-step reaction: L-aspartate is first activated by ATP to form Asp-AMP and then transferred to the acceptor end of tRNA(Asp). The sequence is that of Aspartate--tRNA ligase from Streptococcus pyogenes serotype M18 (strain MGAS8232).